The chain runs to 452 residues: Probable 1,4-beta-D-glucan cellobiohydrolase A (452 aa).

A signal peptide spans 1-17 (MHQRALLFSALAVAANA). An N-linked (GlcNAc...) asparagine glycan is attached at Asn81. The active-site Nucleophile is the Glu226. Glu231 serves as the catalytic Proton donor. Asn284 is a glycosylation site (N-linked (GlcNAc...) asparagine). A disordered region spans residues 406 to 432 (DPSKPGVARGTCEHGAGDPEKVESQHP). Residues 416–431 (TCEHGAGDPEKVESQH) show a composition bias toward basic and acidic residues.

Belongs to the glycosyl hydrolase 7 (cellulase C) family.

It localises to the secreted. It catalyses the reaction Hydrolysis of (1-&gt;4)-beta-D-glucosidic linkages in cellulose and cellotetraose, releasing cellobiose from the non-reducing ends of the chains.. In terms of biological role, the biological conversion of cellulose to glucose generally requires three types of hydrolytic enzymes: (1) Endoglucanases which cut internal beta-1,4-glucosidic bonds; (2) Exocellobiohydrolases that cut the disaccharide cellobiose from the non-reducing end of the cellulose polymer chain; (3) Beta-1,4-glucosidases which hydrolyze the cellobiose and other short cello-oligosaccharides to glucose. This Neosartorya fischeri (strain ATCC 1020 / DSM 3700 / CBS 544.65 / FGSC A1164 / JCM 1740 / NRRL 181 / WB 181) (Aspergillus fischerianus) protein is Probable 1,4-beta-D-glucan cellobiohydrolase A (cbhA).